Reading from the N-terminus, the 407-residue chain is Argininosuccinate synthase (407 aa).

Ala8 to Thr16 provides a ligand contact to ATP. 2 residues coordinate L-citrulline: Tyr86 and Ser91. Gly116 lines the ATP pocket. Residues Thr118, Asn122, and Asp123 each contribute to the L-aspartate site. Asn122 lines the L-citrulline pocket. L-citrulline contacts are provided by Arg126, Ser178, Ser187, Glu264, and Tyr276.

The protein belongs to the argininosuccinate synthase family. Type 1 subfamily. In terms of assembly, homotetramer.

The protein resides in the cytoplasm. The enzyme catalyses L-citrulline + L-aspartate + ATP = 2-(N(omega)-L-arginino)succinate + AMP + diphosphate + H(+). It participates in amino-acid biosynthesis; L-arginine biosynthesis; L-arginine from L-ornithine and carbamoyl phosphate: step 2/3. This Lachnoclostridium phytofermentans (strain ATCC 700394 / DSM 18823 / ISDg) (Clostridium phytofermentans) protein is Argininosuccinate synthase.